A 381-amino-acid chain; its full sequence is Chymosin (381 aa).

The first 16 residues, 1–16, serve as a signal peptide directing secretion; the sequence is MRCLVVLLAALALSQA. Positions 17 to 58 are cleaved as a propeptide — activation peptide; that stretch reads SGITRIPLHKGKTLRKALKERGLLEDFLQRQQYAVSSKYSSL. Residues 74 to 378 enclose the Peptidase A1 domain; sequence YFGKIYIGTP…DRANNRVGLA (305 aa). Asp92 is a catalytic residue. A disulfide bond links Cys105 and Cys110. Residue Asn158 is glycosylated (N-linked (GlcNAc...) asparagine). Residues Cys265 and Cys269 are joined by a disulfide bond. Residue Asp274 is part of the active site. Cysteines 308 and 341 form a disulfide. N-linked (GlcNAc...) asparagine glycosylation occurs at Asn349.

It belongs to the peptidase A1 family.

The catalysed reaction is Broad specificity similar to that of pepsin A. Clots milk by cleavage of a single 104-Ser-Phe-|-Met-Ala-107 bond in kappa-chain of casein.. Its function is as follows. Chymosin is synthesized in the mucosa of the abomasum (fourth stomach) of young (unweaned) ruminants. The enzyme hydrolyzes casein to paracasein. This Camelus dromedarius (Dromedary) protein is Chymosin.